The sequence spans 399 residues: Elongation factor Tu (399 aa).

The region spanning 10 to 204 (KPHVNIGTIG…AVDSSIPEPE (195 aa)) is the tr-type G domain. The G1 stretch occupies residues 19–26 (GHVDHGKT). Residue 19-26 (GHVDHGKT) coordinates GTP. Mg(2+) is bound at residue Thr26. Residues 60-64 (GITIN) form a G2 region. Residues 81–84 (DCPG) form a G3 region. GTP is bound by residues 81 to 85 (DCPGH) and 136 to 139 (NKCD). The G4 stretch occupies residues 136 to 139 (NKCD). The G5 stretch occupies residues 174 to 176 (SGL).

Belongs to the TRAFAC class translation factor GTPase superfamily. Classic translation factor GTPase family. EF-Tu/EF-1A subfamily. In terms of assembly, monomer.

Its subcellular location is the cytoplasm. It catalyses the reaction GTP + H2O = GDP + phosphate + H(+). Its function is as follows. GTP hydrolase that promotes the GTP-dependent binding of aminoacyl-tRNA to the A-site of ribosomes during protein biosynthesis. This chain is Elongation factor Tu, found in Synechococcus sp. (strain CC9605).